We begin with the raw amino-acid sequence, 235 residues long: Phosphoribosylaminoimidazole-succinocarboxamide synthase (235 aa).

Belongs to the SAICAR synthetase family.

The enzyme catalyses 5-amino-1-(5-phospho-D-ribosyl)imidazole-4-carboxylate + L-aspartate + ATP = (2S)-2-[5-amino-1-(5-phospho-beta-D-ribosyl)imidazole-4-carboxamido]succinate + ADP + phosphate + 2 H(+). It functions in the pathway purine metabolism; IMP biosynthesis via de novo pathway; 5-amino-1-(5-phospho-D-ribosyl)imidazole-4-carboxamide from 5-amino-1-(5-phospho-D-ribosyl)imidazole-4-carboxylate: step 1/2. The polypeptide is Phosphoribosylaminoimidazole-succinocarboxamide synthase (Lachnoclostridium phytofermentans (strain ATCC 700394 / DSM 18823 / ISDg) (Clostridium phytofermentans)).